The chain runs to 187 residues: Elongation factor P (187 aa).

The protein belongs to the elongation factor P family.

It is found in the cytoplasm. The protein operates within protein biosynthesis; polypeptide chain elongation. Functionally, involved in peptide bond synthesis. Stimulates efficient translation and peptide-bond synthesis on native or reconstituted 70S ribosomes in vitro. Probably functions indirectly by altering the affinity of the ribosome for aminoacyl-tRNA, thus increasing their reactivity as acceptors for peptidyl transferase. The polypeptide is Elongation factor P (efp) (Synechocystis sp. (strain ATCC 27184 / PCC 6803 / Kazusa)).